The chain runs to 213 residues: Ribulose-phosphate 3-epimerase (213 aa).

Ser-9 is a substrate binding site. His-34, Asp-36, and His-66 together coordinate a divalent metal cation. Residue Asp-36 is the Proton acceptor of the active site. Substrate contacts are provided by residues His-66, Gly-139 to Gly-142, Asp-166 to Gly-168, and Gly-186 to Ser-187. Asp-166 provides a ligand contact to a divalent metal cation. Asp-166 functions as the Proton donor in the catalytic mechanism.

Belongs to the ribulose-phosphate 3-epimerase family. The cofactor is Co(2+). Requires Fe(2+) as cofactor. Mn(2+) is required as a cofactor. Zn(2+) serves as cofactor.

It carries out the reaction D-ribulose 5-phosphate = D-xylulose 5-phosphate. It participates in carbohydrate degradation; pentose phosphate pathway; D-xylulose 5-phosphate from D-ribulose 5-phosphate (non-oxidative stage): step 1/1. Catalyzes the reversible epimerization of D-ribulose 5-phosphate to D-xylulose 5-phosphate. The polypeptide is Ribulose-phosphate 3-epimerase (RPE1) (Encephalitozoon cuniculi (strain GB-M1) (Microsporidian parasite)).